A 243-amino-acid chain; its full sequence is MDGWERAFVLHGRPYSETSLMLDMFTEGHGRVRLLAKGARSRRSNLKGCLQPFTPLLVRWGGRGEVKTLRSAEAVSLGLPLSGMMLYSGLYVNELLSRVLEQEANYSVLFFDYLQCLQALAAEDVSPEQALRQFELALLNHLGYGLDFLHCAGSGLPVDDGMTYRYREEKGFIASLVVDHYSFTGRELRALAERQFPDVQTLRAAKRFTRMALKPYLGGKPLKSRELFRQFVRKQPDPPVDDA.

This sequence belongs to the RecO family.

Functionally, involved in DNA repair and RecF pathway recombination. The chain is DNA repair protein RecO from Serratia proteamaculans (strain 568).